The chain runs to 406 residues: COP9 signalosome complex subunit 4 (406 aa).

N-acetylalanine is present on alanine 2. Lysine 25 is modified (N6-acetyllysine). The 170-residue stretch at tyrosine 197 to alanine 366 folds into the PCI domain.

It belongs to the CSN4 family. Component of the CSN complex, composed of COPS1/GPS1, COPS2, COPS3, COPS4, COPS5, COPS6, COPS7 (COPS7A or COPS7B), COPS8 and COPS9. In the complex, it probably interacts directly with COPS1, COPS2, COPS3, COPS5, COPS6, COPS7 (COPS7A or COPS7B) and COPS8. Interacts with TOR1A; the interaction is direct and associates TOR1A and SNAPIN with the CSN complex. Interacts with STON2; controls STON2 neddylation levels. Interacts with ERCC6.

Its subcellular location is the cytoplasm. The protein localises to the nucleus. It is found in the cytoplasmic vesicle. The protein resides in the secretory vesicle. It localises to the synaptic vesicle. Its function is as follows. Component of the COP9 signalosome complex (CSN), a complex involved in various cellular and developmental processes. The CSN complex is an essential regulator of the ubiquitin (Ubl) conjugation pathway by mediating the deneddylation of the cullin subunits of SCF-type E3 ligase complexes, leading to decrease the Ubl ligase activity of SCF-type complexes such as SCF, CSA or DDB2. Also involved in the deneddylation of non-cullin subunits such as STON2. The complex is also involved in phosphorylation of p53/TP53, c-jun/JUN, IkappaBalpha/NFKBIA, ITPK1, IRF8/ICSBP and SNAPIN, possibly via its association with CK2 and PKD kinases. CSN-dependent phosphorylation of TP53 and JUN promotes and protects degradation by the Ubl system, respectively. This chain is COP9 signalosome complex subunit 4 (COPS4), found in Pongo abelii (Sumatran orangutan).